A 4639-amino-acid chain; its full sequence is Dynein heavy chain, cytoplasmic (4639 aa).

Positions 1-1856 (MGDSLENPDT…TIHMANARFF (1856 aa)) are stem. 3 coiled-coil regions span residues 530–565 (LDIT…LRDQ), 774–794 (SLIE…DRAS), and 1264–1368 (DDAL…ARLR). AAA regions lie at residues 1857–2084 (YGFE…VLIS), 2166–2437 (EEIR…FTRL), 2541–2790 (EVET…WVRG), and 2884–3153 (VFYE…GGRT). ATP-binding positions include 1895-1902 (GPAGTGKT), 2210-2217 (GPSGSGKS), 2580-2587 (GPPGSGKT), and 2922-2929 (GVSGAGKT). 3 coiled-coil regions span residues 3189-3261 (GLNK…EKRK), 3382-3478 (AIAQ…WEST), and 3723-3782 (EFRL…EIET). The segment at 3189–3478 (GLNKIAETVE…NIERERWEST (290 aa)) is stalk. 2 AAA regions span residues 3539–3768 (LSNP…DINQ) and 3989–4205 (AHNV…TLDT).

Belongs to the dynein heavy chain family. As to quaternary structure, consists of at least two heavy chains and a number of intermediate and light chains.

It is found in the cytoplasm. The protein localises to the cytoskeleton. Functionally, cytoplasmic dynein acts as a motor for the intracellular retrograde motility of vesicles and organelles along microtubules. Dynein has ATPase activity; the force-producing power stroke is thought to occur on release of ADP. The protein is Dynein heavy chain, cytoplasmic (Dhc64C) of Drosophila melanogaster (Fruit fly).